The sequence spans 228 residues: Biosynthetic peptidoglycan transglycosylase (228 aa).

A helical transmembrane segment spans residues 8-28 (GVAALLALFLLYQLWIFGHIV).

The protein belongs to the glycosyltransferase 51 family.

It is found in the cell inner membrane. The catalysed reaction is [GlcNAc-(1-&gt;4)-Mur2Ac(oyl-L-Ala-gamma-D-Glu-L-Lys-D-Ala-D-Ala)](n)-di-trans,octa-cis-undecaprenyl diphosphate + beta-D-GlcNAc-(1-&gt;4)-Mur2Ac(oyl-L-Ala-gamma-D-Glu-L-Lys-D-Ala-D-Ala)-di-trans,octa-cis-undecaprenyl diphosphate = [GlcNAc-(1-&gt;4)-Mur2Ac(oyl-L-Ala-gamma-D-Glu-L-Lys-D-Ala-D-Ala)](n+1)-di-trans,octa-cis-undecaprenyl diphosphate + di-trans,octa-cis-undecaprenyl diphosphate + H(+). It participates in cell wall biogenesis; peptidoglycan biosynthesis. Its function is as follows. Peptidoglycan polymerase that catalyzes glycan chain elongation from lipid-linked precursors. This is Biosynthetic peptidoglycan transglycosylase from Laribacter hongkongensis (strain HLHK9).